A 646-amino-acid polypeptide reads, in one-letter code: Esterase EstA (646 aa).

The signal sequence occupies residues 1–24; the sequence is MIRMALKPLVAACLLASLSTAPQA. Residues 25–397 are Extracellular-facing; the sequence is APSPYSTLVV…DSAASGDGNG (373 aa). The Nucleophile role is filled by serine 38. Catalysis depends on residues aspartate 310 and histidine 313. In terms of domain architecture, Autotransporter spans 366–646; it reads QNVGQWRGFV…SVSLALSLDF (281 aa). Residues 398–408 traverse the membrane as a beta stranded segment; it reads YNLTLGGSYRI. Topologically, residues 409–410 are periplasmic; it reads DE. Residues 411 to 421 form a beta stranded membrane-spanning segment; that stretch reads AWRAGVAAGFY. Over 422-437 the chain is Extracellular; it reads RQKLEAGAKDSDYRMN. A beta stranded membrane pass occupies residues 438–447; that stretch reads SYMASAFVQY. Residues 448–451 lie on the Periplasmic side of the membrane; sequence QENR. A beta stranded membrane pass occupies residues 452-461; it reads WWADAALTGG. Over 462-488 the chain is Extracellular; it reads YLDYDDLKRKFALGGGERSEKGDTNGH. A beta stranded transmembrane segment spans residues 489–500; it reads LWAFSARLGYDI. Residues 501–507 lie on the Periplasmic side of the membrane; that stretch reads AQQADSP. Residues 508-518 traverse the membrane as a beta stranded segment; it reads WHLSPFVSADY. Residues 519–547 lie on the Extracellular side of the membrane; the sequence is ARVEVDGYSEKGASATALDYDDQKRSSKR. Residues 548–558 traverse the membrane as a beta stranded segment; the sequence is LGAGLQGKYAF. The Periplasmic segment spans residues 559–561; sequence GSD. The chain crosses the membrane as a beta stranded span at residues 562–571; that stretch reads TQLFAEYAHE. Topologically, residues 572 to 605 are extracellular; sequence REYEDDTQDLTMSLNSLPGNRFTLEGYTPQDHLN. Residues 606–615 form a beta stranded membrane-spanning segment; that stretch reads RVSLGFSQKL. Over 616–618 the chain is Periplasmic; sequence APE. The chain crosses the membrane as a beta stranded span at residues 619–628; sequence LSLRGGYNWR. Residues 629–636 are Extracellular-facing; sequence KGEDDTQQ. A beta stranded membrane pass occupies residues 637-646; that stretch reads SVSLALSLDF.

Belongs to the 'GDSL' lipolytic enzyme family.

The protein resides in the cell outer membrane. It carries out the reaction a carboxylic ester + H2O = an alcohol + a carboxylate + H(+). Functionally, esterase whose enzymatic activity is required for rhamnolipid production, all kinds of cell motility (swimming, swarming, and twitching), and biofilm formation; the exact role of EstA in these processes is unclear. In vitro, has pronounced esterase activities towards p-nitrophenyl esters of short acyl chain length (C4-C6) and Tween detergents. Also shows relatively high activity towards beta-naphthyl butyrate, whereas its activities towards triacylglycerols and acyls-CoA are negligible. The sequence is that of Esterase EstA (estA) from Pseudomonas aeruginosa (strain ATCC 15692 / DSM 22644 / CIP 104116 / JCM 14847 / LMG 12228 / 1C / PRS 101 / PAO1).